A 548-amino-acid chain; its full sequence is Natural resistance-associated macrophage protein 1 (548 aa).

The interval 1–38 (MSGDTGPPKQGGTRYGSISSPPSPEPQQAPPGGTYLSE) is disordered. Residues 1–55 (MSGDTGPPKQGGTRYGSISSPPSPEPQQAPPGGTYLSEKIPIPDTESGTFSLRKL) are Cytoplasmic-facing. A helical membrane pass occupies residues 56–73 (WAFTGPGFLMSIAFLDPG). The Extracellular portion of the chain corresponds to 74–82 (NIESDLQAG). A helical membrane pass occupies residues 83–102 (AVAGFKLLWVLLWATVLGLL). The Cytoplasmic portion of the chain corresponds to 103–139 (CQRLAARLGVVTGKDLGEVCHLYYPKVPRILLWLTIE). The helical transmembrane segment at 140–160 (LAIVGSDMQEVIGTAIAFSLL) threads the bilayer. Topologically, residues 161-164 (SAGR) are extracellular. A helical membrane pass occupies residues 165–184 (IPLWGGVLITVVDTFFFLFL). The Cytoplasmic portion of the chain corresponds to 185–193 (DNYGLRKLE). Residues 194–214 (AFFGFLITIMALTFGYEYVVA) traverse the membrane as a helical segment. The Extracellular portion of the chain corresponds to 215–237 (QPAQGALLQGLFLPSCPGCGQPE). The chain crosses the membrane as a helical span at residues 238–256 (LLQAVGIIGAIIMPHNIYL). Residues 257–284 (HSSLVKSREVDRSRRADIREANMYFLIE) lie on the Cytoplasmic side of the membrane. The chain crosses the membrane as a helical span at residues 285–304 (ATIALSVSFLINLFVMAVFG). The Extracellular segment spans residues 305–346 (QAFYKQTNQAAFNICADSSLHDYAPIFPRNNLTVAVDIYQGG). Residue Asn-335 is glycosylated (N-linked (GlcNAc...) asparagine). The chain crosses the membrane as a helical span at residues 347–366 (VILGCLFGPPALYIWAVGLL). Residues 367 to 397 (AAGQSSTMTGTYAGQFVMEGFLKLRWSRFAR) are Cytoplasmic-facing. The helical transmembrane segment at 398 to 415 (VLLTRSCAILPTVLLAVF) threads the bilayer. Residues 416 to 426 (RDLRDLSGLND) are Extracellular-facing. Residues 427–447 (LLNVLQSLLLPFAVLPILTFT) traverse the membrane as a helical segment. At 448 to 463 (SMPALMQEFANGLVSK) the chain is on the cytoplasmic side. A helical membrane pass occupies residues 464 to 485 (VITSSIMVLVCAVNLYFVISYL). The Extracellular segment spans residues 486–493 (PSLPHPAY). A helical membrane pass occupies residues 494–513 (FSLVALLAAAYLGLTTYLVW). At 514-548 (TCLITQGATLLAHSSHQRFLYGLPEEDQEKGRTSG) the chain is on the cytoplasmic side.

The protein belongs to the NRAMP family.

Its subcellular location is the late endosome membrane. The protein localises to the lysosome membrane. It carries out the reaction Zn(2+)(in) + H(+)(out) = Zn(2+)(out) + H(+)(in). It catalyses the reaction Fe(2+)(in) + H(+)(out) = Fe(2+)(out) + H(+)(in). The catalysed reaction is Mn(2+)(in) + H(+)(out) = Mn(2+)(out) + H(+)(in). Its function is as follows. Macrophage-specific antiporter that fluxes metal ions in either direction against a proton gradient. Localized to late endosomal lysosomal membranes, delivers bivalent cations from the cytosol into these acidic compartments where they may directly affect antimicrobial activity. Involved in iron metabolism and host natural resistance to infection with intracellular parasites. Pathogen resistance involves sequestration of Fe(2+) and Mn(2+), cofactors of both prokaryotic and eukaryotic catalases and superoxide dismutases, not only to protect the macrophage against its own generation of reactive oxygen species, but to deny the cations to the pathogen for synthesis of its protective enzymes. The polypeptide is Natural resistance-associated macrophage protein 1 (SLC11A1) (Bos taurus (Bovine)).